The following is a 253-amino-acid chain: Nurim homolog (253 aa).

Over 1–2 (MT) the chain is Nuclear. Residues 3-30 (SIAKSIVLLASLATFAYSLYVVGSLMMF) traverse the membrane as a helical segment. Topologically, residues 31 to 56 (LSTPRSISKAHTWIFNLLDNKSRLQT) are perinuclear space. Residues 57-78 (AYGPVVFDTLYLIGFIFQHSFL) form a helical membrane-spanning segment. Residues 79–96 (KSAVVKKLLAKLGLSGAE) are Nuclear-facing. Residues 97–113 (RTIYSLTSSLCLHYLIV) form a helical membrane-spanning segment. The Perinuclear space portion of the chain corresponds to 114-132 (NWLPAQSIVLWQIDVEQSA). Residues 133 to 161 (PLWWTFVITHGICWVVIFGGSLVMDLPEL) form a helical membrane-spanning segment. At 162–188 (LGVKQAYYDLKAYGPPISYKSGELRNL) the chain is on the nuclear side. Residues 189-207 (YAHVRHPSFVGLSVILFAT) form a helical membrane-spanning segment. Over 208 to 213 (NVMSVD) the chain is Perinuclear space. A helical transmembrane segment spans residues 214 to 231 (RLVMALLLTTYMYLAWST). Topologically, residues 232 to 253 (DQKDVAYQKIQLQRKKLELKAK) are nuclear.

The protein belongs to the nurim family.

The protein resides in the nucleus inner membrane. The protein is Nurim homolog (nrm) of Drosophila melanogaster (Fruit fly).